Reading from the N-terminus, the 148-residue chain is Large ribosomal subunit protein uL22c (148 aa).

It belongs to the universal ribosomal protein uL22 family. In terms of assembly, part of the 50S ribosomal subunit.

Its subcellular location is the plastid. It is found in the chloroplast. Functionally, this protein binds specifically to 23S rRNA. In terms of biological role, the globular domain of the protein is located near the polypeptide exit tunnel on the outside of the subunit, while an extended beta-hairpin is found that lines the wall of the exit tunnel in the center of the 70S ribosome. In Zea mays (Maize), this protein is Large ribosomal subunit protein uL22c (rpl22).